We begin with the raw amino-acid sequence, 200 residues long: Lipopolysaccharide core heptose(II)-phosphate phosphatase (200 aa).

A signal peptide spans 1 to 25; sequence MLAFCRSSLKSKKYIIILLALAAIA.

It belongs to the phosphoglycerate mutase family. Ais subfamily.

The protein resides in the periplasm. The protein operates within bacterial outer membrane biogenesis; lipopolysaccharide metabolism. Its function is as follows. Catalyzes the dephosphorylation of heptose(II) of the outer membrane lipopolysaccharide core. This is Lipopolysaccharide core heptose(II)-phosphate phosphatase from Escherichia coli (strain ATCC 8739 / DSM 1576 / NBRC 3972 / NCIMB 8545 / WDCM 00012 / Crooks).